The chain runs to 70 residues: Large ribosomal subunit protein bL31 (70 aa).

The Zn(2+) site is built by C16, C18, C37, and C40.

Belongs to the bacterial ribosomal protein bL31 family. Type A subfamily. Part of the 50S ribosomal subunit. Zn(2+) serves as cofactor.

Binds the 23S rRNA. The chain is Large ribosomal subunit protein bL31 from Ectopseudomonas mendocina (strain ymp) (Pseudomonas mendocina).